The chain runs to 359 residues: 4-hydroxy-3-methylbut-2-en-1-yl diphosphate synthase (flavodoxin) (359 aa).

Residues C264, C267, C299, and E306 each coordinate [4Fe-4S] cluster.

It belongs to the IspG family. [4Fe-4S] cluster is required as a cofactor.

The enzyme catalyses (2E)-4-hydroxy-3-methylbut-2-enyl diphosphate + oxidized [flavodoxin] + H2O + 2 H(+) = 2-C-methyl-D-erythritol 2,4-cyclic diphosphate + reduced [flavodoxin]. It participates in isoprenoid biosynthesis; isopentenyl diphosphate biosynthesis via DXP pathway; isopentenyl diphosphate from 1-deoxy-D-xylulose 5-phosphate: step 5/6. Functionally, converts 2C-methyl-D-erythritol 2,4-cyclodiphosphate (ME-2,4cPP) into 1-hydroxy-2-methyl-2-(E)-butenyl 4-diphosphate. In Helicobacter pylori (strain J99 / ATCC 700824) (Campylobacter pylori J99), this protein is 4-hydroxy-3-methylbut-2-en-1-yl diphosphate synthase (flavodoxin).